A 419-amino-acid chain; its full sequence is Coiled-coil domain-containing protein 85C (419 aa).

At A2 the chain carries N-acetylalanine. Coiled-coil stretches lie at residues 22–88 (ELLR…RELC) and 118–159 (HEVA…AALA). Disordered regions lie at residues 162–268 (GAAS…DPSS) and 307–348 (HSES…AGQK). A compositionally biased stretch (gly residues) spans 164–175 (ASGGGGGGGGAG). Residues 176 to 189 (SRSSIDSQASLSGP) show a composition bias toward low complexity. S178 carries the post-translational modification Phosphoserine. Residues 224–233 (PPPLLPPGPH) are compositionally biased toward pro residues. At S246 the chain carries Phosphoserine. Positions 307–325 (HSESQLASLPPSYQDSLQN) are enriched in polar residues. Residues 329–338 (CPAPELPSPP) are compositionally biased toward pro residues.

The protein belongs to the CCDC85 family. As to quaternary structure, may interact with ARVCF, CTNND1, CTNND2 and PKP4.

Its subcellular location is the cell junction. The protein resides in the tight junction. The protein localises to the adherens junction. In terms of biological role, may play a role in cell-cell adhesion and epithelium development through its interaction with proteins of the beta-catenin family. May play an important role in cortical development, especially in the maintenance of radial glia. This Homo sapiens (Human) protein is Coiled-coil domain-containing protein 85C (CCDC85C).